Here is an 800-residue protein sequence, read N- to C-terminus: Cation/H(+) antiporter 9 (800 aa).

A run of 12 helical transmembrane segments spans residues 43–63, 73–93, 110–130, 145–165, 186–206, 216–236, 247–267, 287–306, 338–358, 371–391, 401–421, and 430–450; these read VIFG…FVCI, IGIP…PQLL, NVAL…LMGV, IVIA…FRNF, VIVS…VYEL, IAIS…VCIS, GIAN…LFIF, VYLY…LSVF, LVTN…ADVV, ILLL…PCLI, VIIA…FDVA, and ATYT…PTII.

It belongs to the monovalent cation:proton antiporter 2 (CPA2) transporter (TC 2.A.37) family. CHX (TC 2.A.37.4) subfamily.

It localises to the membrane. May operate as a cation/H(+) antiporter. The sequence is that of Cation/H(+) antiporter 9 (CHX9) from Arabidopsis thaliana (Mouse-ear cress).